The following is a 226-amino-acid chain: Cytochrome c-553I (226 aa).

The first 22 residues, 1-22 (MTSKTTASLLAICVACAASAIA), serve as a signal peptide directing secretion. Positions 43–68 (AAVSGDAHEQPAAEAPAEEEEETPAV) are disordered. The heme site is built by Cys-125, Cys-128, His-129, and Met-173. Residues 203-226 (RGRPAKREDKSDEFVAQEDSCMSG) are disordered.

Binds 1 heme group per subunit.

It is found in the periplasm. The protein is Cytochrome c-553I (cycB) of Paracoccus denitrificans.